The chain runs to 294 residues: Small ribosomal subunit biogenesis GTPase RsgA (294 aa).

In terms of domain architecture, CP-type G spans 63-223 (KNELLRPPIA…VADTPGFSSL (161 aa)). GTP-binding positions include 112 to 115 (SKID) and 166 to 174 (GQSGVGKSS). Residues cysteine 247, cysteine 252, histidine 254, and cysteine 260 each coordinate Zn(2+).

This sequence belongs to the TRAFAC class YlqF/YawG GTPase family. RsgA subfamily. Monomer. Associates with 30S ribosomal subunit, binds 16S rRNA. Requires Zn(2+) as cofactor.

Its subcellular location is the cytoplasm. One of several proteins that assist in the late maturation steps of the functional core of the 30S ribosomal subunit. Helps release RbfA from mature subunits. May play a role in the assembly of ribosomal proteins into the subunit. Circularly permuted GTPase that catalyzes slow GTP hydrolysis, GTPase activity is stimulated by the 30S ribosomal subunit. The protein is Small ribosomal subunit biogenesis GTPase RsgA of Halalkalibacterium halodurans (strain ATCC BAA-125 / DSM 18197 / FERM 7344 / JCM 9153 / C-125) (Bacillus halodurans).